Reading from the N-terminus, the 263-residue chain is 3-methyl-2-oxobutanoate hydroxymethyltransferase (263 aa).

D45 and D84 together coordinate Mg(2+). Residues 45–46, D84, and K112 contribute to the 3-methyl-2-oxobutanoate site; that span reads DS. E114 contributes to the Mg(2+) binding site. Catalysis depends on E180, which acts as the Proton acceptor.

It belongs to the PanB family. In terms of assembly, homodecamer; pentamer of dimers. The cofactor is Mg(2+).

Its subcellular location is the cytoplasm. It carries out the reaction 3-methyl-2-oxobutanoate + (6R)-5,10-methylene-5,6,7,8-tetrahydrofolate + H2O = 2-dehydropantoate + (6S)-5,6,7,8-tetrahydrofolate. The protein operates within cofactor biosynthesis; (R)-pantothenate biosynthesis; (R)-pantoate from 3-methyl-2-oxobutanoate: step 1/2. Functionally, catalyzes the reversible reaction in which hydroxymethyl group from 5,10-methylenetetrahydrofolate is transferred onto alpha-ketoisovalerate to form ketopantoate. This chain is 3-methyl-2-oxobutanoate hydroxymethyltransferase, found in Klebsiella pneumoniae subsp. pneumoniae (strain ATCC 700721 / MGH 78578).